The primary structure comprises 962 residues: MREESWEEHDTIQLTAQRKYLAEVQALETLLARELSVFLTEPGSKKTNIINRITGKTYALPSTELLRLYEHLEQCRKQGALMYFLERQGTYSGLMLDYDLKLNTNAAPSLESSVLSRLCHRIFVHIKNSSVLPEGSHKIHFFFTLKPEAVQGKYGFHVLIPGLKMAASTKKSIIASLQHDATVQKILHEQGVANPESCLDPHSASVPSLLYGSSKLNHKPYQLKTGFELVFDSSDPDYIPIHQIKNIESYNLVSELSLTNEQGSLVRPVYCAADIAAEKEEEIPADDHSLSILMLHDPEARYLHKILNLLPPEYYVEYPLWSNVVFALANTSANYRPLAEWFSQKCPEKWNTGGKEKLEKLWNDASHHTEKKITKRSIMYWAHKHAPQQYKEIVEQGYFSILAEYVYSYNGTLEHYMIAKVIYAMMGNKFVVDVDSNGKYVWFEFVLPGQPMNQGEIWKWRKEVNPDELHIYISENFSRVMDRITEHIKYHLSQPHETNILNYYKKLLKAFERSKSKIFNDSFKKGVIRQAEFLFRQRSFIQTLDTNPHLLGVGNGVLSIETIPAKLINHFHEHPIHQYTHICYVPFNPENPWTKLLLNALQDIIPELDARLWIMFYLSTAIFRGLKEALMLLWLGGGCNGKTFLMRLVAMVLGDHYASKLNISLLTSYRETAEKPNSAFMRLKGRGYGYFEETNKSEVLNTSRLKEMVNPGDVTARELNQKQESFQMTATMVAASNYNFIIDTTDHGTWRRLRHYRSKVKFCHNPDPNNSYEKKEDPRFIHEYIMDPNCQNAFFSILVYFWEKLQKEYNGQIKKVFCPTIESETEAYRKSQDTLHRFITERVVESPSAETVYNLSEVVTAYAEWYNANINVKRHIALELSQELENSVLEKYLQWSPNKTRILKGCRILHKFETLQPGESYIGVSSTGTLLNTPICEPKNKWWEWSPNPSAPPEKEASAPTP.

The region spanning 607–775 (ELDARLWIMF…PDPNNSYEKK (169 aa)) is the SF3 helicase domain. An ATP-binding site is contributed by 636 to 643 (GGGCNGKT).

It belongs to the asfivirus helicase C962R family.

The protein is Putative primase C962R of African swine fever virus (isolate Pig/Kenya/KEN-50/1950) (ASFV).